Consider the following 152-residue polypeptide: MMKKIDVKILDPRVGEQFPLPTYATSGSAGLDLRACLDESVELTPGATTLLPTGLAIHIADPSLAAVILPRSGLGHKHGVVLGNLVGLIDSDYQGQLMVSVWNRGQQSFTIEPGERIAQMVFVPVVQAEFNLVEDFTATDRGEGGFGHSGRK.

Substrate is bound by residues 71–73, N84, 88–90, and M98; these read RSG and LID.

This sequence belongs to the dUTPase family. Mg(2+) is required as a cofactor.

The catalysed reaction is dUTP + H2O = dUMP + diphosphate + H(+). The protein operates within pyrimidine metabolism; dUMP biosynthesis; dUMP from dCTP (dUTP route): step 2/2. In terms of biological role, this enzyme is involved in nucleotide metabolism: it produces dUMP, the immediate precursor of thymidine nucleotides and it decreases the intracellular concentration of dUTP so that uracil cannot be incorporated into DNA. This is Deoxyuridine 5'-triphosphate nucleotidohydrolase from Cronobacter sakazakii (strain ATCC BAA-894) (Enterobacter sakazakii).